A 178-amino-acid chain; its full sequence is NADH-quinone oxidoreductase subunit I (178 aa).

4Fe-4S ferredoxin-type domains are found at residues 45–74 and 90–119; these read RHPD…VEAA and KVYE…LGNE. [4Fe-4S] cluster-binding residues include Cys54, Cys57, Cys60, Cys64, Cys99, Cys102, Cys105, and Cys109.

It belongs to the complex I 23 kDa subunit family. In terms of assembly, NDH-1 is composed of 15 different subunits. Subunits NuoA, H, J, K, L, M, N constitute the membrane sector of the complex. [4Fe-4S] cluster is required as a cofactor.

It localises to the cell membrane. It carries out the reaction a quinone + NADH + 5 H(+)(in) = a quinol + NAD(+) + 4 H(+)(out). NDH-1 shuttles electrons from NADH, via FMN and iron-sulfur (Fe-S) centers, to quinones in the respiratory chain. The immediate electron acceptor for the enzyme in this species is believed to be ubiquinone. Couples the redox reaction to proton translocation (for every two electrons transferred, four hydrogen ions are translocated across the cytoplasmic membrane), and thus conserves the redox energy in a proton gradient. This chain is NADH-quinone oxidoreductase subunit I, found in Deinococcus radiodurans (strain ATCC 13939 / DSM 20539 / JCM 16871 / CCUG 27074 / LMG 4051 / NBRC 15346 / NCIMB 9279 / VKM B-1422 / R1).